The following is a 645-amino-acid chain: Pro-neuregulin-1, membrane-bound isoform (645 aa).

Residues M1 to G19 constitute a propeptide that is removed on maturation. The disordered stretch occupies residues M1–K52. Residues S20–R247 are Extracellular-facing. The Ig-like C2-type domain maps to P37–T128. Cysteines 57 and 112 form a disulfide. Polar residues predominate over residues M139 to N164. The disordered stretch occupies residues M139–G175. Residues T165–G175 are compositionally biased toward low complexity. Residues H178–Q222 form the EGF-like domain. Intrachain disulfides connect C182/C196, C190/C210, and C212/C221. Residues V248–A268 form a helical membrane-spanning segment. Topologically, residues Y269–V645 are cytoplasmic. The span at S340–T355 shows a compositional bias: low complexity. 4 disordered regions span residues S340–H364, S380–C406, M433–S463, and E531–F593. Over residues G392–G402 the composition is skewed to gly residues. The span at T547–P557 shows a compositional bias: basic residues. The segment covering D568–E579 has biased composition (low complexity).

The protein belongs to the neuregulin family. In terms of assembly, the cytoplasmic domain interacts with the LIM domain region of LIMK1. Forms a ternary complex with ERBB3 and ITGAV:ITGB3 or ITGA6:ITGB4. Interacts with NRDC and BACE1. Proteolytic cleavage close to the plasma membrane on the external face leads to the release of the soluble growth factor form. In terms of processing, N- and O-glycosylated. Extensive glycosylation precedes the proteolytic cleavage.

It localises to the cell membrane. It is found in the secreted. Direct ligand for ERBB3 and ERBB4 tyrosine kinase receptors. Concomitantly recruits ERBB1 and ERBB2 coreceptors, resulting in ligand-stimulated tyrosine phosphorylation and activation of the ERBB receptors. Perform diverse functions such as inducing growth and differentiation of epithelial, glial, neuronal, and skeletal muscle cells; inducing expression of acetylcholine receptor in synaptic vesicles during the formation of the neuromuscular junction; stimulating lobuloalveolar budding and milk production in the mammary gland and inducing differentiation of mammary tumor cells; stimulating Schwann cell proliferation; implication in the development of the myocardium such as trabeculation of the developing heart. Binds to ERBB4 and ERBB3. Acts as a ligand for integrins and binds (via EGF domain) to integrins ITGAV:ITGB3 or ITGA6:ITGB4. Its binding to integrins and subsequent ternary complex formation with integrins and ERRB3 are essential for NRG1-ERBB signaling. Induces the phosphorylation and activation of MAPK3/ERK1, MAPK1/ERK2 and AKT1, and ligand-dependent ERBB4 endocytosis is essential for the NRG1-mediated activation of these kinases in neurons. The protein is Pro-neuregulin-1, membrane-bound isoform of Mus musculus (Mouse).